The following is a 138-amino-acid chain: Large ribosomal subunit protein bL17 (138 aa).

This sequence belongs to the bacterial ribosomal protein bL17 family. As to quaternary structure, part of the 50S ribosomal subunit. Contacts protein L32.

This is Large ribosomal subunit protein bL17 from Halorhodospira halophila (strain DSM 244 / SL1) (Ectothiorhodospira halophila (strain DSM 244 / SL1)).